Reading from the N-terminus, the 94-residue chain is Protein RnfH (94 aa).

It belongs to the UPF0125 (RnfH) family.

This is Protein RnfH from Serratia proteamaculans (strain 568).